A 268-amino-acid chain; its full sequence is MAVNVYSTSVTSDNLSRHDMLAWINESLQLNLTKIEQLCSGAAYCQFMDMLFPGSIALKKVKFQAKLEHEYIQNFKILQAGFKRMGVDKIIPVDKLVKGKFQDNFEFVQWFKKFFDANYDGKEYDPVAARQGQETAMAPSLVAPALNKPKKPLSSSSAAPQRPITTHRTTATPKAGPGVVRKNPGVGNGDDEAAELMQQVNVLKLTVEDLEKERDFYFGKLRNIELICQENEGENNPVLQRIVDILYATDEGFVIPDEGGPQEEQEEY.

Residue Ala-2 is modified to N-acetylalanine. Residues Asn-14–Asp-116 enclose the Calponin-homology (CH) domain. Lys-66 bears the N6-crotonyllysine mark. The residue at position 124 (Tyr-124) is a Phosphotyrosine. The interaction with MTUS2/TIP150 stretch occupies residues Tyr-124–Tyr-268. The span at Asn-147–Pro-160 shows a compositional bias: low complexity. Positions Asn-147–Pro-184 are disordered. Position 155 is a phosphoserine (Ser-155). A compositionally biased stretch (polar residues) spans Pro-163–Thr-172. Positions Gly-185–Ile-255 constitute an EB1 C-terminal domain. The interaction with CDK5RAP2 stretch occupies residues Gly-185 to Tyr-268. The interval Thr-206–Glu-211 is interaction with APC. Positions Glu-208–Tyr-268 are DCTN1-binding. Lys-220 carries the post-translational modification N6-acetyllysine. The tract at residues Lys-220–Ile-242 is APC-binding. An interaction with SKA1 region spans residues Glu-232–Ile-255.

The protein belongs to the MAPRE family. In terms of assembly, homodimer. Heterodimer with MAPRE3. Interacts with DCTN1, DCTN2, TERF1 and dynein intermediate chain. Interaction with DIAPH1 and DIAPH2. Interacts (via C-terminal residues 206-211) with APC (via C-terminal residues 2674-2845); the interaction inhibits association with and bundling of F-actin. Interacts with CLASP2, DST, KIF2C and STIM1; probably required for their targeting to the growing microtubule plus ends. Interacts with MTUS2; interaction is direct and probably targets MTUS2 to microtubules. Interacts (via C-terminus) with SKA1 (via SXIP motif); the interaction is direct and stabilizes the kinetochore-microtubule attachment of the SKA1 complex. Interacts with APC2. Interacts with CLASP1. Interacts with CDK5RAP2. Interacts with MACF1. Interacts with RABL2/RABL2A; binds preferentially to GTP-bound RABL2. Interacts with KCNAB2. Interacts (via C-terminus) with CLIP1. Interacts with SLAIN2 and SLAIN1. Interacts with KIF18B; this interaction is required for efficient accumulation of KIF18B at microtubule plus ends. Interacts with MISP. Interacts with KNSTRN. Interacts with NCKAP5L. Interacts with CAMSAP2. Interacts with PDE4DIP isoform 13/MMG8/SMYLE; this interaction is required for its recruitment to the Golgi apparatus. Forms a pericentrosomal complex with AKAP9, CDK5RAP2 and PDE4DIP isoform 13/MMG8/SMYLE; within this complex, MAPRE1 binding to CDK5RAP2 may be mediated by PDE4DIP. Interacts with AKNA. Interacts with GAS2L1, GAS2L2, and GAS2L3. In terms of processing, acetylation at Lys-220 by KAT2B/PCAF promotes dynamic kinetochore-microtubule interactions in early mitosis. Post-translationally, crotonylated by KAT5 during mitosis, promoting astral microtubule plasticity and dynamic connection between astral microtubules and the cortex during mitotic chromosome segregation, thereby ensuring accurate spindle positioning in mitosis. Decrotonylated by HDAC3.

It is found in the cytoplasm. The protein localises to the cytoskeleton. The protein resides in the microtubule organizing center. It localises to the centrosome. Its subcellular location is the golgi apparatus. It is found in the spindle. The protein localises to the spindle pole. Plus-end tracking protein (+TIP) that binds to the plus-end of microtubules and regulates the dynamics of the microtubule cytoskeleton. Recruits other +TIP proteins to microtubules by binding to a conserved Ser-X-Leu-Pro (SXLP) motif in their polypeptide chains. Promotes cytoplasmic microtubule nucleation and elongation. Involved in mitotic spindle positioning by stabilizing microtubules and promoting dynamic connection between astral microtubules and the cortex during mitotic chromosome segregation. Assists chromosome alignment in metaphase by recruiting the SKA complex to the spindle and stabilizing its interactions with microtubule bundles (K-fibers). Also acts as a regulator of minus-end microtubule organization: interacts with the complex formed by AKAP9 and PDE4DIP, leading to recruit CAMSAP2 to the Golgi apparatus, thereby tethering non-centrosomal minus-end microtubules to the Golgi, an important step for polarized cell movement. Promotes elongation of CAMSAP2-decorated microtubule stretches on the minus-end of microtubules. Acts as a regulator of autophagosome transport via interaction with CAMSAP2. Functions downstream of Rho GTPases and DIAPH1 in stable microtubule formation. May play a role in cell migration. In Bos taurus (Bovine), this protein is Microtubule-associated protein RP/EB family member 1 (MAPRE1).